Reading from the N-terminus, the 704-residue chain is MPNLLLELRSEEIPARMQRKAAGDLKKLVTDALVEAGLSYEGAREYWTPRRLALDIHGLTARSADVREERKGPRTDANEKAIEGFLRGAGLSSISEAQVVNDPKKGDFYVAVISKPGRATEEIVAEVMPGIIRDFPWPKSMRWGKASSAPGALRWVRPLQSIVCTFGPEHEETTVIPFEIDGITASNITYGHRFHAPEAIMVRRFDDYAASLERAKVILDAERRKDIILHDARDIAFANGLELVEDEGLLEEVSGLVEWPQVLMGSFEEDYLSIPSEIIRLTIKTNQKCFVTRKQGEDTLSNRFILVSNIEASDGGKEIVHGNGKVVRARLSDALHFWKRDQGNLPDLETLAASAAKFGLDLQKPLDQRMAKLDALDVTFHAKLGTQGARVARIRALAQKLAAVTGADAALTDRAAVLAKADLRTEAVGEFPELQGLMGRKYAALQGENASVAAAIEDHYKPQGPSDRVPEDKVAITLALADKLDTLTGFWAIDEKPTGSKDPFALRRAALGVVRILLERGIRLPLLATTRDGDLLSFFHDRLKVYLRDQGARHDLIDAVLTPEADDLLMVARRVEALTAFITSEDGKNLLAGTKRATQLLAAEEKKGTVIADGVSPALFKLDAEKELFAAISSASKDAANAVAGEDFRSAMEALSKLRGPVDRFFEDVLVNDEDAAIRANRLALLRLIREATGTVADFSKISG.

It belongs to the class-II aminoacyl-tRNA synthetase family. As to quaternary structure, tetramer of two alpha and two beta subunits.

The protein resides in the cytoplasm. The catalysed reaction is tRNA(Gly) + glycine + ATP = glycyl-tRNA(Gly) + AMP + diphosphate. The chain is Glycine--tRNA ligase beta subunit from Rhizobium etli (strain ATCC 51251 / DSM 11541 / JCM 21823 / NBRC 15573 / CFN 42).